Consider the following 259-residue polypeptide: uncharacterized protein (259 aa).

The ABC transporter domain occupies 4 to 248 (LQTTNLSKTY…SILDTLSVLG (245 aa)). Residue 42–49 (GPSGSGKT) coordinates ATP.

It belongs to the ABC transporter superfamily.

This is an uncharacterized protein from Bacillus subtilis (strain 168).